A 255-amino-acid polypeptide reads, in one-letter code: 4-hydroxy-tetrahydrodipicolinate reductase (255 aa).

NAD(+) is bound by residues 9–14 (GFKGKM), Asp-35, 89–91 (GTT), and 115–118 (APNF). Catalysis depends on His-145, which acts as the Proton donor/acceptor. His-146 serves as a coordination point for (S)-2,3,4,5-tetrahydrodipicolinate. The active-site Proton donor is the Lys-149. (S)-2,3,4,5-tetrahydrodipicolinate is bound at residue 155–156 (GT).

The protein belongs to the DapB family.

Its subcellular location is the cytoplasm. The enzyme catalyses (S)-2,3,4,5-tetrahydrodipicolinate + NAD(+) + H2O = (2S,4S)-4-hydroxy-2,3,4,5-tetrahydrodipicolinate + NADH + H(+). It carries out the reaction (S)-2,3,4,5-tetrahydrodipicolinate + NADP(+) + H2O = (2S,4S)-4-hydroxy-2,3,4,5-tetrahydrodipicolinate + NADPH + H(+). It participates in amino-acid biosynthesis; L-lysine biosynthesis via DAP pathway; (S)-tetrahydrodipicolinate from L-aspartate: step 4/4. In terms of biological role, catalyzes the conversion of 4-hydroxy-tetrahydrodipicolinate (HTPA) to tetrahydrodipicolinate. The chain is 4-hydroxy-tetrahydrodipicolinate reductase from Streptococcus pneumoniae (strain P1031).